A 116-amino-acid chain; its full sequence is Large ribosomal subunit protein bL19c (116 aa).

This sequence belongs to the bacterial ribosomal protein bL19 family.

It localises to the plastid. Its subcellular location is the chloroplast. The protein is Large ribosomal subunit protein bL19c of Cyanidium caldarium (Red alga).